A 249-amino-acid polypeptide reads, in one-letter code: Homeobox protein TGIF2LX (249 aa).

Residues 1–27 show a composition bias toward basic and acidic residues; the sequence is MEAAADRPAETRSRVEKDSRRAKKDSP. Disordered stretches follow at residues 1-60 and 121-215; these read MEAA…KKKR and QRRG…EPVS. Positions 28 to 46 are enriched in polar residues; sequence AKTQSPAQDTSIMLRSNAD. A DNA-binding region (homeobox; TALE-type) is located at residues 55 to 118; that stretch reads EHKKKRKGYL…INARRRILPD (64 aa). Residues 159–172 are compositionally biased toward polar residues; that stretch reads DNVQSLPLRSSPKG. Positions 202-215 are enriched in low complexity; that stretch reads VSNITSSSSPEPVS.

It belongs to the TALE/TGIF homeobox family.

It is found in the nucleus. May have a transcription role in testis. This is Homeobox protein TGIF2LX (TGIF2LX) from Miopithecus talapoin (Angolan talapoin).